Consider the following 343-residue polypeptide: Phosphoglycerate mutase-like protein 2 (343 aa).

Residues 1 to 35 constitute a chloroplast transit peptide; it reads MIHQSMTSNLSFYISSVSHLSSPLPSLSRLSLRCC. His65 serves as the catalytic Tele-phosphohistidine intermediate. Residue Glu177 is the Proton donor/acceptor of the active site. Positions 322-343 are disordered; that stretch reads MTNYPGTILTGEDASSDIADQK.

It belongs to the phosphoglycerate mutase family.

The protein localises to the plastid. The protein resides in the chloroplast. Its function is as follows. May play a role in carbohydrates metabolism. This is Phosphoglycerate mutase-like protein 2 from Arabidopsis thaliana (Mouse-ear cress).